A 501-amino-acid chain; its full sequence is ADP,ATP carrier protein 3 (501 aa).

12 helical membrane passes run 23–43, 59–79, 90–110, 146–166, 183–203, 227–247, 293–313, 326–346, 361–381, 383–403, 446–466, and 470–490; these read LKLF…FGAL, IISF…TILY, YIFY…AYII, YALM…LMFW, PVLG…LVFF, IMLQ…MFLF, IALL…PWKA, VNFM…FMII, LLTP…IIFI, EIGT…VGAI, FGKS…PTAT, and IIIY…WNII.

It belongs to the ADP/ATP translocase tlc family.

The protein resides in the cell membrane. In terms of biological role, provides the rickettsial cell with host ATP in exchange for rickettsial ADP. This is an obligate exchange system. This energy acquiring activity is an important component of rickettsial parasitism. This Rickettsia prowazekii (strain Madrid E) protein is ADP,ATP carrier protein 3 (tlcC).